A 365-amino-acid polypeptide reads, in one-letter code: Ribosomal RNA large subunit methyltransferase F (365 aa).

Residues 1–50 form a disordered region; sequence MSKPAVKSVPSATAKTATRAVNIRQKVKAPKQAKPEAKGRAKPSKDKPRA. The span at 33–50 shows a compositional bias: basic and acidic residues; sequence AKPEAKGRAKPSKDKPRA.

This sequence belongs to the methyltransferase superfamily. METTL16/RlmF family.

It localises to the cytoplasm. The catalysed reaction is adenosine(1618) in 23S rRNA + S-adenosyl-L-methionine = N(6)-methyladenosine(1618) in 23S rRNA + S-adenosyl-L-homocysteine + H(+). Specifically methylates the adenine in position 1618 of 23S rRNA. The protein is Ribosomal RNA large subunit methyltransferase F of Shewanella baltica (strain OS155 / ATCC BAA-1091).